The primary structure comprises 199 residues: NAD(P)H quinone oxidoreductase PST3 (199 aa).

The 189-residue stretch at 5-193 folds into the Flavodoxin-like domain; sequence VAIIIYSLYH…EIAFIQGKSF (189 aa). FMN is bound by residues 11 to 15 and 111 to 165; these read SLYHH and IFVS…SPYG.

The protein belongs to the WrbA family. Requires FMN as cofactor.

It localises to the cell membrane. It catalyses the reaction a quinone + NADH + H(+) = a quinol + NAD(+). It carries out the reaction a quinone + NADPH + H(+) = a quinol + NADP(+). Its function is as follows. Flavodoxin-like protein (FLP) that plays a role in cell wall integrity, oxidative stress protection and virulence. FLPs act as NAD(P)H quinone oxidoreductases. Reduces ubiquinone (coenzyme Q), enabling it to serve as an antioxidant in the membrane. The chain is NAD(P)H quinone oxidoreductase PST3 from Candida albicans (strain SC5314 / ATCC MYA-2876) (Yeast).